The primary structure comprises 274 residues: Protein-export membrane protein SecF (274 aa).

A run of 6 helical transmembrane segments spans residues Leu-14–Val-34, Ser-121–Phe-141, Lys-143–Gly-163, Ala-175–Tyr-197, Thr-217–Met-237, and Val-247–Ile-267.

The protein belongs to the SecD/SecF family. SecF subfamily. Part of the protein translocation apparatus. Forms a complex with SecD.

The protein localises to the cell membrane. Its function is as follows. Involved in protein export. The protein is Protein-export membrane protein SecF of Methanopyrus kandleri (strain AV19 / DSM 6324 / JCM 9639 / NBRC 100938).